A 327-amino-acid polypeptide reads, in one-letter code: Lipoyl synthase (327 aa).

The [4Fe-4S] cluster site is built by cysteine 72, cysteine 77, cysteine 83, cysteine 98, cysteine 102, cysteine 105, and serine 313. The Radical SAM core domain occupies 83-302; the sequence is CWSHGTATIM…RKVGLEKGFL (220 aa).

Belongs to the radical SAM superfamily. Lipoyl synthase family. It depends on [4Fe-4S] cluster as a cofactor.

The protein localises to the cytoplasm. It catalyses the reaction [[Fe-S] cluster scaffold protein carrying a second [4Fe-4S](2+) cluster] + N(6)-octanoyl-L-lysyl-[protein] + 2 oxidized [2Fe-2S]-[ferredoxin] + 2 S-adenosyl-L-methionine + 4 H(+) = [[Fe-S] cluster scaffold protein] + N(6)-[(R)-dihydrolipoyl]-L-lysyl-[protein] + 4 Fe(3+) + 2 hydrogen sulfide + 2 5'-deoxyadenosine + 2 L-methionine + 2 reduced [2Fe-2S]-[ferredoxin]. It functions in the pathway protein modification; protein lipoylation via endogenous pathway; protein N(6)-(lipoyl)lysine from octanoyl-[acyl-carrier-protein]: step 2/2. In terms of biological role, catalyzes the radical-mediated insertion of two sulfur atoms into the C-6 and C-8 positions of the octanoyl moiety bound to the lipoyl domains of lipoate-dependent enzymes, thereby converting the octanoylated domains into lipoylated derivatives. In Francisella tularensis subsp. holarctica (strain FTNF002-00 / FTA), this protein is Lipoyl synthase.